Consider the following 473-residue polypeptide: Ribulose bisphosphate carboxylase large chain (473 aa).

Substrate-binding residues include N116 and T166. The active-site Proton acceptor is the K168. K170 lines the substrate pocket. K194, D196, and E197 together coordinate Mg(2+). Residue K194 is modified to N6-carboxylysine. H287 serves as the catalytic Proton acceptor. 3 residues coordinate substrate: R288, H320, and S372.

This sequence belongs to the RuBisCO large chain family. Type I subfamily. As to quaternary structure, heterohexadecamer of 8 large chains and 8 small chains. The cofactor is Mg(2+).

It carries out the reaction 2 (2R)-3-phosphoglycerate + 2 H(+) = D-ribulose 1,5-bisphosphate + CO2 + H2O. The enzyme catalyses D-ribulose 1,5-bisphosphate + O2 = 2-phosphoglycolate + (2R)-3-phosphoglycerate + 2 H(+). RuBisCO catalyzes two reactions: the carboxylation of D-ribulose 1,5-bisphosphate, the primary event in carbon dioxide fixation, as well as the oxidative fragmentation of the pentose substrate. Both reactions occur simultaneously and in competition at the same active site. In Nitrosomonas eutropha (strain DSM 101675 / C91 / Nm57), this protein is Ribulose bisphosphate carboxylase large chain.